We begin with the raw amino-acid sequence, 130 residues long: Small ribosomal subunit protein uS11c (130 aa).

This sequence belongs to the universal ribosomal protein uS11 family. In terms of assembly, part of the 30S ribosomal subunit.

It localises to the plastid. The protein localises to the chloroplast. This chain is Small ribosomal subunit protein uS11c, found in Psilotum nudum (Whisk fern).